The following is a 353-amino-acid chain: C-X-C chemokine receptor type 4 (353 aa).

Residues 1–22 (MEELHIYPSDNYTEEDLGSGDY) form an important for chemokine binding and signaling region. Over 1 to 39 (MEELHIYPSDNYTEEDLGSGDYDSMKEPCFREENAHFNR) the chain is Extracellular. Y7 bears the Sulfotyrosine mark. N-linked (GlcNAc...) asparagine glycosylation is present at N11. Sulfotyrosine is present on Y12. O-linked (Xyl...) (chondroitin sulfate) serine glycosylation occurs at S19. Y22 is modified (sulfotyrosine). 2 disulfide bridges follow: C29–C275 and C110–C187. A helical membrane pass occupies residues 40–64 (IFLPTVYSIIFLTGIVGNGLVILVM). Residues 65–78 (GYQKKLRSMTDKYR) lie on the Cytoplasmic side of the membrane. The chain crosses the membrane as a helical span at residues 79–100 (LHLSVADLLFVLTLPFWAVEAV). Residues 95-98 (WAVE) form a chemokine binding region. The Extracellular portion of the chain corresponds to 101–111 (ANWYFGNFLCK). A helical transmembrane segment spans residues 112–131 (AVHVIYTVNLYSSVLILAFI). A chemokine binding region spans residues 114 to 118 (HVIYT). Residues 132-155 (SLDRYLAIVHATNSQRPRKLLAEK) are Cytoplasmic-facing. Residues 134–136 (DRY) carry the Important for signaling motif. Residues 136-148 (YLAIVHATNSQRP) are involved in dimerization; when bound to chemokine. The helical transmembrane segment at 156-175 (VVYVGVWIPALLLTIPDFIF) threads the bilayer. The Extracellular portion of the chain corresponds to 176–196 (ANVREADDRYICDRFYPNDSW). The interval 187-191 (CDRFY) is chemokine binding, important for signaling. The interval 192-211 (PNDSWLVVFQFQHIMVGLIL) is involved in dimerization. A helical membrane pass occupies residues 197 to 217 (LVVFQFQHIMVGLILPGIVIL). Residues 218-242 (SCYCIIISKLSHSKGYQKRKALKTT) lie on the Cytoplasmic side of the membrane. A helical transmembrane segment spans residues 243 to 262 (VILILAFFACWLPYYIGISI). Over 263–283 (DSFILLEIIKQGCEFEKTVHK) the chain is Extracellular. An involved in dimerization region spans residues 267–269 (LLE). Residues 284–303 (WISITEALAFFHCCLNPILY) form a helical membrane-spanning segment. The Cytoplasmic portion of the chain corresponds to 304–353 (AFLGAKFKTSAQHALTSVSRGSSLKILSKGKRGGHSSVSTESESSSFHSS). Phosphoserine occurs at positions 320 and 322. A phosphoserine; by PKC and GRK6 mark is found at S325 and S326. The segment at 330–353 (LSKGKRGGHSSVSTESESSSFHSS) is disordered. S331 carries the phosphoserine; by GRK6 modification. K332 participates in a covalent cross-link: Glycyl lysine isopeptide (Lys-Gly) (interchain with G-Cter in ubiquitin). Residues 338–353 (HSSVSTESESSSFHSS) show a composition bias toward low complexity. The residue at position 340 (S340) is a Phosphoserine; by GRK6. S349 and S352 each carry phosphoserine.

It belongs to the G-protein coupled receptor 1 family. In terms of assembly, monomer. Can form homodimers. Interacts with CD164. Interacts with ARRB2; the interaction is dependent on the C-terminal phosphorylation of CXCR4 and allows activation of MAPK1 and MAPK3. Interacts with ARR3; the interaction is dependent on the C-terminal phosphorylation of CXCR4 and modulates calcium mobilization. Interacts with RNF113A; the interaction, enhanced by CXCL12, promotes CXCR4 ubiquitination and subsequent degradation. Interacts (via the cytoplasmic C-terminal) with ITCH (via the WW domains I and II); the interaction, enhanced by CXCL12, promotes CXCR4 ubiquitination and leads to its degradation. Interacts with extracellular ubiquitin. Interacts with DBN1; this interaction is enhanced by antigenic stimulation. Following LPS binding, may form a complex with GDF5, HSP90AA1 and HSPA8. In terms of processing, phosphorylated on agonist stimulation. Rapidly phosphorylated on serine and threonine residues in the C-terminal. Phosphorylation at Ser-325 and Ser-326 leads to recruitment of ITCH, ubiquitination and protein degradation. Ubiquitinated after ligand binding, leading to its degradation. Ubiquitinated by ITCH at the cell membrane on agonist stimulation. The ubiquitin-dependent mechanism, endosomal sorting complex required for transport (ESCRT), then targets CXCR4 for lysosomal degradation. This process is dependent also on prior Ser-/Thr-phosphorylation in the C-terminal of CXCR4. Also binding of ARRB1 to STAM negatively regulates CXCR4 sorting to lysosomes though modulating ubiquitination of SFR5S. Post-translationally, sulfation is required for efficient binding of CXCL12/SDF-1alpha and promotes its dimerization. In terms of processing, O- and N-glycosylated. N-glycosylation can mask coreceptor function. The O-glycosylation chondroitin sulfate attachment does not affect interaction with CXCL12/SDF-1alpha nor its coreceptor activity.

The protein resides in the cell membrane. It localises to the cell junction. The protein localises to the early endosome. It is found in the late endosome. Its subcellular location is the lysosome. In terms of biological role, receptor for the C-X-C chemokine CXCL12/SDF-1 that transduces a signal by increasing intracellular calcium ion levels and enhancing MAPK1/MAPK3 activation. Involved in the AKT signaling cascade. Plays a role in regulation of cell migration, e.g. during wound healing. Acts as a receptor for extracellular ubiquitin; leading to enhanced intracellular calcium ions and reduced cellular cAMP levels. Binds bacterial lipopolysaccharide (LPS) et mediates LPS-induced inflammatory response, including TNF secretion by monocytes. Involved in hematopoiesis and in cardiac ventricular septum formation. Also plays an essential role in vascularization of the gastrointestinal tract, probably by regulating vascular branching and/or remodeling processes in endothelial cells. Involved in cerebellar development. In the CNS, could mediate hippocampal-neuron survival. This Canis lupus familiaris (Dog) protein is C-X-C chemokine receptor type 4 (CXCR4).